Here is a 707-residue protein sequence, read N- to C-terminus: Kinesin-like protein KIN-13B (707 aa).

In terms of domain architecture, Kinesin motor spans 152-477 (KIKVVVRKRP…LRYADRVKSL (326 aa)). Residue 243–250 (GQTGSGKT) participates in ATP binding. A coiled-coil region spans residues 619 to 656 (EHLNELLQEEEDLVSAHRKQVEETLDMIKEEMNLLVEA).

The protein belongs to the TRAFAC class myosin-kinesin ATPase superfamily. Kinesin family. KIN-13 subfamily.

This is Kinesin-like protein KIN-13B from Oryza sativa subsp. japonica (Rice).